Consider the following 353-residue polypeptide: Farnesyl pyrophosphate synthase (353 aa).

The isopentenyl diphosphate site is built by Lys-57, Arg-60, and Gln-96. Lys-57 is modified (N6-(2-hydroxyisobutyryl)lysine; alternate). Position 57 is an N6-acetyllysine; alternate (Lys-57). Residues Asp-103 and Asp-107 each contribute to the Mg(2+) site. Arg-112 provides a ligand contact to dimethylallyl diphosphate. Arg-113 serves as a coordination point for isopentenyl diphosphate. Dimethylallyl diphosphate is bound by residues Lys-200, Thr-201, Gln-240, Lys-257, and Lys-266.

Belongs to the FPP/GGPP synthase family. Homodimer. Interacts with RSAD2. Mg(2+) is required as a cofactor.

It localises to the cytoplasm. It catalyses the reaction isopentenyl diphosphate + dimethylallyl diphosphate = (2E)-geranyl diphosphate + diphosphate. The catalysed reaction is isopentenyl diphosphate + (2E)-geranyl diphosphate = (2E,6E)-farnesyl diphosphate + diphosphate. It functions in the pathway isoprenoid biosynthesis; farnesyl diphosphate biosynthesis; farnesyl diphosphate from geranyl diphosphate and isopentenyl diphosphate: step 1/1. Its pathway is isoprenoid biosynthesis; geranyl diphosphate biosynthesis; geranyl diphosphate from dimethylallyl diphosphate and isopentenyl diphosphate: step 1/1. Inactivated by interferon-induced RSAD2. This inactivation may result of disruption of lipid rafts at the plasma membrane, and thus have an antiviral effect since many enveloped viruses need lipid rafts to bud efficiently out of the cell. Its function is as follows. Key enzyme in isoprenoid biosynthesis which catalyzes the formation of farnesyl diphosphate (FPP), a precursor for several classes of essential metabolites including sterols, dolichols, carotenoids, and ubiquinones. FPP also serves as substrate for protein farnesylation and geranylgeranylation. Catalyzes the sequential condensation of isopentenyl pyrophosphate with the allylic pyrophosphates, dimethylallyl pyrophosphate, and then with the resultant geranylpyrophosphate to the ultimate product farnesyl pyrophosphate. The chain is Farnesyl pyrophosphate synthase (Fdps) from Mus musculus (Mouse).